Reading from the N-terminus, the 150-residue chain is Large ribosomal subunit protein uL15 (150 aa).

A disordered region spans residues Met-1–Leu-57. Gly residues predominate over residues Val-23–Met-35.

The protein belongs to the universal ribosomal protein uL15 family. In terms of assembly, part of the 50S ribosomal subunit.

Its function is as follows. Binds to the 23S rRNA. In Synechococcus sp. (strain JA-2-3B'a(2-13)) (Cyanobacteria bacterium Yellowstone B-Prime), this protein is Large ribosomal subunit protein uL15.